The primary structure comprises 253 residues: ATP synthase subunit a (253 aa).

Helical transmembrane passes span Phe-30–Ala-50, Phe-88–Val-108, Ile-118–Ile-138, Phe-144–Ile-164, Met-184–Ala-204, and Val-211–Phe-231.

Belongs to the ATPase A chain family. In terms of assembly, F-type ATPases have 2 components, CF(1) - the catalytic core - and CF(0) - the membrane proton channel. CF(1) has five subunits: alpha(3), beta(3), gamma(1), delta(1), epsilon(1). CF(0) has three main subunits: a(1), b(2) and c(9-12). The alpha and beta chains form an alternating ring which encloses part of the gamma chain. CF(1) is attached to CF(0) by a central stalk formed by the gamma and epsilon chains, while a peripheral stalk is formed by the delta and b chains.

Its subcellular location is the cell inner membrane. Functionally, key component of the proton channel; it plays a direct role in the translocation of protons across the membrane. This is ATP synthase subunit a from Beijerinckia indica subsp. indica (strain ATCC 9039 / DSM 1715 / NCIMB 8712).